The following is a 229-amino-acid chain: Ribonuclease 3 (229 aa).

In terms of domain architecture, RNase III spans 4–133; sequence WEELQESVGF…FIGALYLDNG (130 aa). Residue Glu46 coordinates Mg(2+). Residue Asp50 is part of the active site. Mg(2+)-binding residues include Asp119 and Glu122. Residue Glu122 is part of the active site. The DRBM domain occupies 159–228; the sequence is DYKTQLQEIV…AQFAINQLTH (70 aa).

It belongs to the ribonuclease III family. In terms of assembly, homodimer. It depends on Mg(2+) as a cofactor.

The protein localises to the cytoplasm. The enzyme catalyses Endonucleolytic cleavage to 5'-phosphomonoester.. Functionally, digests double-stranded RNA. Involved in the processing of primary rRNA transcript to yield the immediate precursors to the large and small rRNAs (23S and 16S). Processes some mRNAs, and tRNAs when they are encoded in the rRNA operon. Processes pre-crRNA and tracrRNA of type II CRISPR loci if present in the organism. The polypeptide is Ribonuclease 3 (Listeria welshimeri serovar 6b (strain ATCC 35897 / DSM 20650 / CCUG 15529 / CIP 8149 / NCTC 11857 / SLCC 5334 / V8)).